Consider the following 592-residue polypeptide: Isocitrate dehydrogenase kinase/phosphatase 1 (592 aa).

Residues alanine 337–methionine 343 and lysine 358 contribute to the ATP site. Residue aspartate 393 is part of the active site.

It belongs to the AceK family.

The protein localises to the cytoplasm. The enzyme catalyses L-seryl-[isocitrate dehydrogenase] + ATP = O-phospho-L-seryl-[isocitrate dehydrogenase] + ADP + H(+). Its function is as follows. Bifunctional enzyme which can phosphorylate or dephosphorylate isocitrate dehydrogenase (IDH) on a specific serine residue. This is a regulatory mechanism which enables bacteria to bypass the Krebs cycle via the glyoxylate shunt in response to the source of carbon. When bacteria are grown on glucose, IDH is fully active and unphosphorylated, but when grown on acetate or ethanol, the activity of IDH declines drastically concomitant with its phosphorylation. The protein is Isocitrate dehydrogenase kinase/phosphatase 1 of Pseudoalteromonas translucida (strain TAC 125).